The chain runs to 109 residues: Protein ELF4-LIKE 3 (109 aa).

The disordered stretch occupies residues 88-109 (SMEASSEGDSSEGRGNRRIRPA).

Belongs to the EARLY FLOWERING 4 family. In terms of assembly, homodimer.

The protein resides in the nucleus. Its function is as follows. Component of the central CCA1/LHY-TOC1 feedback loop in the circadian clock that promotes clock accuracy and is required for sustained rhythms in the absence of daily light/dark cycles. This chain is Protein ELF4-LIKE 3 (EFL3), found in Arabidopsis thaliana (Mouse-ear cress).